Consider the following 219-residue polypeptide: Ribose-5-phosphate isomerase A (219 aa).

Residues 28–31, 81–84, and 94–97 contribute to the substrate site; these read TGST, DGAD, and KGGG. Glu-103 functions as the Proton acceptor in the catalytic mechanism. Lys-121 serves as a coordination point for substrate.

This sequence belongs to the ribose 5-phosphate isomerase family. As to quaternary structure, homodimer.

It carries out the reaction aldehydo-D-ribose 5-phosphate = D-ribulose 5-phosphate. The protein operates within carbohydrate degradation; pentose phosphate pathway; D-ribose 5-phosphate from D-ribulose 5-phosphate (non-oxidative stage): step 1/1. Its function is as follows. Catalyzes the reversible conversion of ribose-5-phosphate to ribulose 5-phosphate. This is Ribose-5-phosphate isomerase A from Shewanella frigidimarina (strain NCIMB 400).